Here is a 216-residue protein sequence, read N- to C-terminus: U1 small nuclear ribonucleoprotein C (216 aa).

A Matrin-type zinc finger spans residues 4-36 (FFCDYCDVYLTHDSMSVRKAHNAGRNHLRNVVE). Composition is skewed to pro residues over residues 68 to 80 (AMAPPGAFPPPFG), 87 to 198 (QLPP…PAPP), and 206 to 216 (PGPPPGLSEKR). Residues 68-216 (AMAPPGAFPP…GPPPGLSEKR (149 aa)) are disordered.

The protein belongs to the U1 small nuclear ribonucleoprotein C family. In terms of assembly, U1 snRNP is composed of the 7 core Sm proteins B/B', D1, D2, D3, E, F and G that assemble in a heptameric protein ring on the Sm site of the small nuclear RNA to form the core snRNP, and at least 3 U1 snRNP-specific proteins U1-70K, U1-A and U1-C. U1-C interacts with U1 snRNA and the 5' splice-site region of the pre-mRNA.

It localises to the nucleus. In terms of biological role, component of the spliceosomal U1 snRNP, which is essential for recognition of the pre-mRNA 5' splice-site and the subsequent assembly of the spliceosome. U1-C is directly involved in initial 5' splice-site recognition for both constitutive and regulated alternative splicing. The interaction with the 5' splice-site seems to precede base-pairing between the pre-mRNA and the U1 snRNA. Stimulates commitment or early (E) complex formation by stabilizing the base pairing of the 5' end of the U1 snRNA and the 5' splice-site region. The chain is U1 small nuclear ribonucleoprotein C from Aspergillus fumigatus (strain ATCC MYA-4609 / CBS 101355 / FGSC A1100 / Af293) (Neosartorya fumigata).